The chain runs to 108 residues: Glutaredoxin-1 (108 aa).

In terms of domain architecture, Glutaredoxin spans 3–106; it reads EEFVQQRLAN…DILSSIGVLR (104 aa). A disulfide bridge links Cys-23 with Cys-26.

Belongs to the glutaredoxin family.

The protein localises to the virion. Its function is as follows. Has thioltransferase and dehydroascorbate reductase activities. The polypeptide is Glutaredoxin-1 (OPG075) (Ectromelia virus (strain Moscow) (ECTV)).